The chain runs to 467 residues: Cysteine--tRNA ligase (467 aa).

Cys28 lines the Zn(2+) pocket. Positions 30 to 40 (MTVYDYCHLGH) match the 'HIGH' region motif. Positions 209, 234, and 238 each coordinate Zn(2+). The 'KMSKS' region signature appears at 266 to 270 (KMSKS). Lys269 lines the ATP pocket.

This sequence belongs to the class-I aminoacyl-tRNA synthetase family. As to quaternary structure, monomer. It depends on Zn(2+) as a cofactor.

It is found in the cytoplasm. It catalyses the reaction tRNA(Cys) + L-cysteine + ATP = L-cysteinyl-tRNA(Cys) + AMP + diphosphate. The polypeptide is Cysteine--tRNA ligase (Hahella chejuensis (strain KCTC 2396)).